The sequence spans 60 residues: Small, acid-soluble spore protein H 2 (60 aa).

Positions 38–60 are disordered; the sequence is TIHPLDNPSQKQSVPVASLEEHS.

Belongs to the SspH family.

The protein resides in the spore core. The polypeptide is Small, acid-soluble spore protein H 2 (Geobacillus thermodenitrificans (strain NG80-2)).